The following is a 945-amino-acid chain: Leucine--tRNA ligase (945 aa).

The 'HIGH' region motif lies at 43–53; sequence PYPNGAIHIGH. Positions 638–642 match the 'KMSKS' region motif; it reads KMSKS. Lys641 contributes to the ATP binding site.

Belongs to the class-I aminoacyl-tRNA synthetase family.

It localises to the cytoplasm. The catalysed reaction is tRNA(Leu) + L-leucine + ATP = L-leucyl-tRNA(Leu) + AMP + diphosphate. The chain is Leucine--tRNA ligase from Pyrobaculum arsenaticum (strain DSM 13514 / JCM 11321 / PZ6).